Here is a 435-residue protein sequence, read N- to C-terminus: Manganese transport system membrane protein MntC (435 aa).

The next 9 membrane-spanning stretches (helical) occupy residues 17 to 37, 42 to 62, 68 to 88, 98 to 118, 143 to 163, 166 to 186, 189 to 209, 228 to 248, and 255 to 275; these read VLAG…FVLL, LIGD…FLFT, PFFL…IQLI, SAIG…LTYI, QDII…IVFF, FTLI…VRFL, LLAC…GVIL, LTGM…AGTL, and GMAT…FSMI.

This sequence belongs to the ABC-3 integral membrane protein family. The complex is probably composed of two ATP-binding proteins (MntB), two transmembrane proteins (MntC and MntD) and a solute-binding protein (MntA).

Its subcellular location is the cell membrane. In terms of biological role, probably part of the ABC transporter complex MntABCD involved in manganese import. Probably responsible for the translocation of the substrate across the membrane. The polypeptide is Manganese transport system membrane protein MntC (Bacillus subtilis (strain 168)).